A 434-amino-acid chain; its full sequence is Trigger factor (434 aa).

The PPIase FKBP-type domain occupies 160-245 (GDKVKMNFVG…LTEVQAANLP (86 aa)).

The protein belongs to the FKBP-type PPIase family. Tig subfamily.

The protein localises to the cytoplasm. It catalyses the reaction [protein]-peptidylproline (omega=180) = [protein]-peptidylproline (omega=0). Its function is as follows. Involved in protein export. Acts as a chaperone by maintaining the newly synthesized protein in an open conformation. Functions as a peptidyl-prolyl cis-trans isomerase. The sequence is that of Trigger factor from Shewanella baltica (strain OS223).